Consider the following 273-residue polypeptide: Tryptase (273 aa).

Residues methionine 1–alanine 18 form the signal peptide. A propeptide spans alanine 19–glycine 28 (activation peptide). The region spanning isoleucine 29 to proline 270 is the Peptidase S1 domain. Residue asparagine 49 is glycosylated (N-linked (GlcNAc...) asparagine). Residues cysteine 57 and cysteine 73 are joined by a disulfide bond. Active-site charge relay system residues include histidine 72 and aspartate 119. Asparagine 130 carries an N-linked (GlcNAc...) asparagine glycan. Intrachain disulfides connect cysteine 153–cysteine 228, cysteine 186–cysteine 209, and cysteine 218–cysteine 246. The active-site Charge relay system is serine 222.

It belongs to the peptidase S1 family. Tryptase subfamily.

It carries out the reaction Preferential cleavage: Arg-|-Xaa, Lys-|-Xaa, but with more restricted specificity than trypsin.. Functionally, tryptase is the major neutral protease present in mast cells and is secreted upon the coupled activation-degranulation response of this cell type. May play a role in innate immunity. The polypeptide is Tryptase (Tpsab1) (Mus musculus (Mouse)).